Consider the following 111-residue polypeptide: WAP four-disulfide core domain protein 12 (111 aa).

An N-terminal signal peptide occupies residues 1–23 (MGSSSFLVLMVSLALVTLVAAEG). One can recognise a WAP domain in the interval 27–74 (GIEKAGVCPADNIRCFKSDPPQCHTDQDCLGERKCCYLHCGFKCVIPV). Cystine bridges form between C34–C62, C41–C66, C49–C61, and C55–C70. The tract at residues 80–111 (GGNKDEDVSGPCPEPGWEAKSPGSSSTGCPQK) is disordered. Residues 101 to 111 (PGSSSTGCPQK) show a composition bias toward polar residues.

The protein resides in the secreted. In terms of biological role, antibacterial protein. Putative acid-stable proteinase inhibitor. The protein is WAP four-disulfide core domain protein 12 (WFDC12) of Macaca mulatta (Rhesus macaque).